We begin with the raw amino-acid sequence, 95 residues long: Aspartyl/glutamyl-tRNA(Asn/Gln) amidotransferase subunit C (95 aa).

It belongs to the GatC family. In terms of assembly, heterotrimer of A, B and C subunits.

The enzyme catalyses L-glutamyl-tRNA(Gln) + L-glutamine + ATP + H2O = L-glutaminyl-tRNA(Gln) + L-glutamate + ADP + phosphate + H(+). The catalysed reaction is L-aspartyl-tRNA(Asn) + L-glutamine + ATP + H2O = L-asparaginyl-tRNA(Asn) + L-glutamate + ADP + phosphate + 2 H(+). Functionally, allows the formation of correctly charged Asn-tRNA(Asn) or Gln-tRNA(Gln) through the transamidation of misacylated Asp-tRNA(Asn) or Glu-tRNA(Gln) in organisms which lack either or both of asparaginyl-tRNA or glutaminyl-tRNA synthetases. The reaction takes place in the presence of glutamine and ATP through an activated phospho-Asp-tRNA(Asn) or phospho-Glu-tRNA(Gln). This is Aspartyl/glutamyl-tRNA(Asn/Gln) amidotransferase subunit C from Pseudomonas paraeruginosa (strain DSM 24068 / PA7) (Pseudomonas aeruginosa (strain PA7)).